The following is an 869-amino-acid chain: Bifunctional uridylyltransferase/uridylyl-removing enzyme (869 aa).

Residues 1 to 332 (MTDAPAERPD…QFDGEATPES (332 aa)) form a uridylyltransferase region. A uridylyl-removing region spans residues 333-691 (LGGGFSLRRG…RRAVPDNDAL (359 aa)). An HD domain is found at 450–572 (VDQHTLMVLR…VGTRERLDYL (123 aa)). 2 ACT domains span residues 692 to 774 (EVFV…RAVP) and 798 to 869 (RISL…LDPV).

It belongs to the GlnD family. The cofactor is Mg(2+).

The catalysed reaction is [protein-PII]-L-tyrosine + UTP = [protein-PII]-uridylyl-L-tyrosine + diphosphate. It carries out the reaction [protein-PII]-uridylyl-L-tyrosine + H2O = [protein-PII]-L-tyrosine + UMP + H(+). Its activity is regulated as follows. Uridylyltransferase (UTase) activity is inhibited by glutamine, while glutamine activates uridylyl-removing (UR) activity. Modifies, by uridylylation and deuridylylation, the PII regulatory proteins (GlnB and homologs), in response to the nitrogen status of the cell that GlnD senses through the glutamine level. Under low glutamine levels, catalyzes the conversion of the PII proteins and UTP to PII-UMP and PPi, while under higher glutamine levels, GlnD hydrolyzes PII-UMP to PII and UMP (deuridylylation). Thus, controls uridylylation state and activity of the PII proteins, and plays an important role in the regulation of nitrogen assimilation and metabolism. In Xanthomonas oryzae pv. oryzae (strain MAFF 311018), this protein is Bifunctional uridylyltransferase/uridylyl-removing enzyme.